The following is an 89-amino-acid chain: Small ribosomal subunit protein bS20 (89 aa).

Belongs to the bacterial ribosomal protein bS20 family.

Functionally, binds directly to 16S ribosomal RNA. The protein is Small ribosomal subunit protein bS20 of Wolbachia sp. subsp. Drosophila simulans (strain wRi).